The following is a 449-amino-acid chain: Protein translocase subunit SecD (449 aa).

The next 6 helical transmembrane spans lie at 6-26 (GLVF…VLPT), 272-292 (LAVK…IAFY), 294-314 (LPGL…LALF), 317-337 (VPVT…GMAV), 379-399 (TFIA…GAPV), and 401-421 (GFAV…IFVT).

The protein belongs to the SecD/SecF family. SecD subfamily. As to quaternary structure, forms a complex with SecF. Part of the essential Sec protein translocation apparatus which comprises SecA, SecYEG and auxiliary proteins SecDF. Other proteins may also be involved.

The protein localises to the cell membrane. Part of the Sec protein translocase complex. Interacts with the SecYEG preprotein conducting channel. SecDF uses the proton motive force (PMF) to complete protein translocation after the ATP-dependent function of SecA. In Dehalococcoides mccartyi (strain VS), this protein is Protein translocase subunit SecD.